Consider the following 69-residue polypeptide: Large ribosomal subunit protein bL32c (69 aa).

Belongs to the bacterial ribosomal protein bL32 family.

The protein localises to the plastid. It localises to the chloroplast. The protein is Large ribosomal subunit protein bL32c of Pelargonium hortorum (Common geranium).